The sequence spans 416 residues: Gamma-glutamyl phosphate reductase (416 aa).

It belongs to the gamma-glutamyl phosphate reductase family.

The protein localises to the cytoplasm. It carries out the reaction L-glutamate 5-semialdehyde + phosphate + NADP(+) = L-glutamyl 5-phosphate + NADPH + H(+). Its pathway is amino-acid biosynthesis; L-proline biosynthesis; L-glutamate 5-semialdehyde from L-glutamate: step 2/2. Catalyzes the NADPH-dependent reduction of L-glutamate 5-phosphate into L-glutamate 5-semialdehyde and phosphate. The product spontaneously undergoes cyclization to form 1-pyrroline-5-carboxylate. The chain is Gamma-glutamyl phosphate reductase from Streptococcus equi subsp. zooepidemicus (strain MGCS10565).